Here is a 271-residue protein sequence, read N- to C-terminus: ATP synthase subunit a (271 aa).

Transmembrane regions (helical) follow at residues 40–60, 100–120, 146–166, 220–240, and 242–262; these read TINI…LVLF, LIAP…LMDL, DVNV…FYNI, LIFI…LNVP, and AIFH…LTIV.

It belongs to the ATPase A chain family. As to quaternary structure, F-type ATPases have 2 components, CF(1) - the catalytic core - and CF(0) - the membrane proton channel. CF(1) has five subunits: alpha(3), beta(3), gamma(1), delta(1), epsilon(1). CF(0) has three main subunits: a(1), b(2) and c(9-12). The alpha and beta chains form an alternating ring which encloses part of the gamma chain. CF(1) is attached to CF(0) by a central stalk formed by the gamma and epsilon chains, while a peripheral stalk is formed by the delta and b chains.

Its subcellular location is the cell inner membrane. Key component of the proton channel; it plays a direct role in the translocation of protons across the membrane. The sequence is that of ATP synthase subunit a from Shigella flexneri.